Reading from the N-terminus, the 452-residue chain is Chromosomal replication initiator protein DnaA (452 aa).

A domain I, interacts with DnaA modulators region spans residues 1 to 84; sequence MTENEQIFWN…SIEYVFEETQ (84 aa). Positions 84–110 are domain II; the sequence is QSTSNSPQISQNKTAELATETLPFVQN. Positions 111–329 are domain III, AAA+ region; it reads DLNPKYSFDN…GALKDISLVA (219 aa). ATP is bound by residues glycine 155, glycine 157, lysine 158, and threonine 159. Residues 330–452 are domain IV, binds dsDNA; the sequence is NFKKLDVITV…EMETIKNKIK (123 aa).

It belongs to the DnaA family. In terms of assembly, oligomerizes as a right-handed, spiral filament on DNA at oriC.

The protein localises to the cytoplasm. Functionally, plays an essential role in the initiation and regulation of chromosomal replication. ATP-DnaA binds to the origin of replication (oriC) to initiate formation of the DNA replication initiation complex once per cell cycle. Binds the DnaA box (a 9 base pair repeat at the origin) and separates the double-stranded (ds)DNA. Forms a right-handed helical filament on oriC DNA; dsDNA binds to the exterior of the filament while single-stranded (ss)DNA is stabiized in the filament's interior. The ATP-DnaA-oriC complex binds and stabilizes one strand of the AT-rich DNA unwinding element (DUE), permitting loading of DNA polymerase. After initiation quickly degrades to an ADP-DnaA complex that is not apt for DNA replication. Binds acidic phospholipids. This is Chromosomal replication initiator protein DnaA from Streptococcus mutans serotype c (strain ATCC 700610 / UA159).